The primary structure comprises 155 residues: Microsomal glutathione S-transferase 1 (155 aa).

Residues 3–9 (DLTELMK) are Lumenal-facing. Residues 10-33 (NEVFMAFASYATIVLSKMMFMSTA) traverse the membrane as a helical segment. The Cytoplasmic portion of the chain corresponds to 34 to 62 (TAFYRLTRKVFANPEDCSSFGKGENAKKY). Arginine 38 is a binding site for glutathione. N6-acetyllysine occurs at positions 42, 55, and 60. Residues 63–96 (LRTDERVERVRRAHLNDLENIVPFLGIGLLYSLS) traverse the membrane as a helical segment. 4 residues coordinate glutathione: arginine 73, arginine 74, histidine 76, and glutamate 81. At 97-99 (GPD) the chain is on the lumenal side. Residues 100–123 (LSTAILHFRLFVGARIYHTIAYLT) traverse the membrane as a helical segment. Tyrosine 121 provides a ligand contact to glutathione. The Cytoplasmic segment spans residues 124-128 (PLPQP). A helical membrane pass occupies residues 129–148 (NRGLAFFLGYGVTLSMAYRL). At 149-155 (LKSRLYL) the chain is on the lumenal side.

The protein belongs to the MAPEG family. Homotrimer; The trimer binds only one molecule of glutathione.

It is found in the endoplasmic reticulum membrane. It localises to the mitochondrion outer membrane. It catalyses the reaction RX + glutathione = an S-substituted glutathione + a halide anion + H(+). Conjugation of reduced glutathione to a wide number of exogenous and endogenous hydrophobic electrophiles. The polypeptide is Microsomal glutathione S-transferase 1 (MGST1) (Sus scrofa (Pig)).